A 237-amino-acid chain; its full sequence is Ribonuclease PH (237 aa).

Phosphate-binding positions include Arg-86 and 124-126; that span reads GTR.

It belongs to the RNase PH family. Homohexameric ring arranged as a trimer of dimers.

The catalysed reaction is tRNA(n+1) + phosphate = tRNA(n) + a ribonucleoside 5'-diphosphate. In terms of biological role, phosphorolytic 3'-5' exoribonuclease that plays an important role in tRNA 3'-end maturation. Removes nucleotide residues following the 3'-CCA terminus of tRNAs; can also add nucleotides to the ends of RNA molecules by using nucleoside diphosphates as substrates, but this may not be physiologically important. Probably plays a role in initiation of 16S rRNA degradation (leading to ribosome degradation) during starvation. In Coxiella burnetii (strain RSA 331 / Henzerling II), this protein is Ribonuclease PH.